Here is a 713-residue protein sequence, read N- to C-terminus: Serine/threonine-protein kinase SSN3 (713 aa).

In terms of domain architecture, Protein kinase spans 66 to 484; sequence YTILGFLSSG…ANQALEHAWF (419 aa). An ATP-binding site is contributed by 72-80; the sequence is LSSGTYGRV. Residues 104-120 are compositionally biased toward low complexity; the sequence is NAGTGSGTATVGSGAST. The interval 104–188 is disordered; the sequence is NAGTGSGTAT…GGSDNTLQLS (85 aa). Residues 129 to 142 show a composition bias toward polar residues; that stretch reads QQHQLLDSPSSSLH. A compositionally biased stretch (low complexity) spans 158 to 175; sequence GTPSASPSLSASLGTSTA. Lys-201 lines the ATP pocket. Asp-304 (proton acceptor) is an active-site residue. Over residues 657–672 the composition is skewed to polar residues; it reads SNPATVRSSHSIGSTE. Residues 657–713 form a disordered region; it reads SNPATVRSSHSIGSTESITPTTSSQPIPAQPSSAPLARTTNLVATATRNQQRKRQRN. The span at 673–691 shows a compositional bias: low complexity; that stretch reads SITPTTSSQPIPAQPSSAP. Polar residues predominate over residues 694-705; the sequence is RTTNLVATATRN.

This sequence belongs to the protein kinase superfamily. CMGC Ser/Thr protein kinase family. CDC2/CDKX subfamily. In terms of assembly, component of the srb8-11 complex, a regulatory module of the Mediator complex. Mg(2+) is required as a cofactor.

Its subcellular location is the nucleus. The enzyme catalyses L-seryl-[protein] + ATP = O-phospho-L-seryl-[protein] + ADP + H(+). It carries out the reaction L-threonyl-[protein] + ATP = O-phospho-L-threonyl-[protein] + ADP + H(+). The catalysed reaction is [DNA-directed RNA polymerase] + ATP = phospho-[DNA-directed RNA polymerase] + ADP + H(+). Functionally, component of the srb8-11 complex. The srb8-11 complex is a regulatory module of the Mediator complex which is itself dependent transcription. The srb8-11 complex may be involved in the transcriptional repression of a subset of genes regulated by Mediator. It may inhibit the association of the Mediator complex with RNA polymerase II to form the holoenzyme complex. The srb8-11 complex phosphorylates the C-terminal domain (CTD) of the largest subunit of RNA polymerase II. In Mycosarcoma maydis (Corn smut fungus), this protein is Serine/threonine-protein kinase SSN3 (SSN3).